A 186-amino-acid chain; its full sequence is Ribosome-recycling factor (186 aa).

This sequence belongs to the RRF family.

It localises to the cytoplasm. Functionally, responsible for the release of ribosomes from messenger RNA at the termination of protein biosynthesis. May increase the efficiency of translation by recycling ribosomes from one round of translation to another. This is Ribosome-recycling factor from Nitratiruptor sp. (strain SB155-2).